Here is a 3097-residue protein sequence, read N- to C-terminus: Neural-cadherin (3097 aa).

Positions 1-36 (MAARRCLNQLRQRYITNRFNICTCAIFLISLPFILA) are cleaved as a signal peptide. Asn-97 and Asn-150 each carry an N-linked (GlcNAc...) asparagine glycan. The region spanning 181-305 (VRENQPAGTR…LDENDNRPIF (125 aa)) is the Cadherin 1 domain. N-linked (GlcNAc...) asparagine glycans are attached at residues Asn-325 and Asn-426. Cadherin domains lie at 430–543 (HREK…PPYF), 554–651 (VQLN…APQF), 660–756 (IPEN…APKF), 766–858 (VDED…EPKF), 867–968 (VDEN…KPVF), 978–1078 (VEEG…PPLF), 1087–1183 (VKQD…PPVW), 1193–1299 (VKEN…IPLF), 1307–1414 (VLEG…PPYF), 1423–1514 (VDEN…PPVF), 1523–1630 (ITEE…APIF), 1639–1742 (VTEN…PPQF), 1749–1861 (TEVD…KPHF), 1870–1966 (VFED…APKF), and 1974–2085 (LPEH…QPGS). An N-linked (GlcNAc...) asparagine glycan is attached at Asn-930. A glycan (N-linked (GlcNAc...) asparagine) is linked at Asn-1266. 11 disulfide bridges follow: Cys-2346–Cys-2357, Cys-2351–Cys-2366, Cys-2368–Cys-2377, Cys-2559–Cys-2585, Cys-2592–Cys-2607, Cys-2601–Cys-2616, Cys-2618–Cys-2627, Cys-2787–Cys-2822, Cys-2869–Cys-2880, Cys-2874–Cys-2891, and Cys-2893–Cys-2902. Positions 2346–2377 (CRTTPCHNGGRCVDTRFGPHCSCPVGYTGPRC) constitute an EGF-like 1 domain. One can recognise a Laminin G-like 1 domain in the interval 2379 to 2585 (QTTRSFRGNG…GLSRNSVAGC (207 aa)). Residues 2592–2627 (CAQTETTARCWEHGNCVGSLSEARCHCRPGWTGPAC) enclose the EGF-like 2 domain. The Laminin G-like 2 domain occupies 2631 to 2822 (TIPTTFKAQS…TMARNLEKGC (192 aa)). An EGF-like 3 domain is found at 2869-2902 (CLDMPCMNGATCINLEPRLRYRCICPDGFWGENC). Residues 2917 to 2937 (ALAAILVCLLIILILVLVFVV) traverse the membrane as a helical segment. The Cytoplasmic portion of the chain corresponds to 2938–3097 (YNRRREAHIK…PNPHNTELEL (160 aa)).

In the embryo, the protein first appears in the mesoderm at stage 9 and is present in the myoblasts and muscle fibers by stage 12 and stage 14, respectively. At stage 12 the protein is also located in the axons of the entire CNS, but not in the glial cells. In third instar larvae protein is expressed in the CNS neuropile, photoreceptor axons and precursors of adult muscles.

The protein resides in the cell membrane. In terms of biological role, cadherins are calcium-dependent cell adhesion proteins. They preferentially interact with themselves in a homophilic manner in connecting cells; cadherins may thus contribute to the sorting of heterogeneous cell types. May associate with arm neural isoform and participate in the transmission of developmental information. The polypeptide is Neural-cadherin (CadN) (Drosophila melanogaster (Fruit fly)).